The following is a 338-amino-acid chain: O-methyltransferase 4 (338 aa).

Residues Gly-184, Asp-207, Asn-230, Phe-231, Lys-244, and Arg-245 each contribute to the S-adenosyl-L-methionine site. Catalysis depends on His-248, which acts as the Proton acceptor.

The protein belongs to the class I-like SAM-binding methyltransferase superfamily. Cation-independent O-methyltransferase family. COMT subfamily.

The enzyme catalyses (3,5-dichloro-2,4,6-trihydroxyphenyl)hexan-1-one + S-adenosyl-L-methionine = 1-(3,5-dichloro-2,6-dihydroxy-4-methoxyphenyl)hexan-1-one + S-adenosyl-L-homocysteine + H(+). This Dictyostelium discoideum (Social amoeba) protein is O-methyltransferase 4 (omt4).